Consider the following 182-residue polypeptide: RFKKIRRLGALPGLTSKRPRSGIDLKNQLRSGKRSQYRIRLEEKQKLRFHYGLTERQLLKYVHIAGKAKGSTGQVLLQLLEMRLDNILFRLGMASTIPGARQLVNHRHILVNGRIVDIPSYRCKPRDIITTKDKERSKVLIQNYIASSPHAELPNHLIIDPLQYKGLVNQIIDSKWIGLKIN.

Residues 82-143 (MRLDNILFRL…KERSKVLIQN (62 aa)) enclose the S4 RNA-binding domain.

Belongs to the universal ribosomal protein uS4 family. Part of the 30S ribosomal subunit. Contacts protein S5. The interaction surface between S4 and S5 is involved in control of translational fidelity.

The protein localises to the plastid. It is found in the chloroplast. Functionally, one of the primary rRNA binding proteins, it binds directly to 16S rRNA where it nucleates assembly of the body of the 30S subunit. With S5 and S12 plays an important role in translational accuracy. This chain is Small ribosomal subunit protein uS4c (rps4), found in Alophia veracruzana (Mexican pine woods lily).